We begin with the raw amino-acid sequence, 358 residues long: C-X-C chemokine receptor type 4-A (358 aa).

The interval 1 to 25 (MDGFSGGIDINIFDGNSTENGSGDF) is important for chemokine binding and signaling. At 1 to 44 (MDGFSGGIDINIFDGNSTENGSGDFEDFIEPCFMHENSDFNRIF) the chain is on the extracellular side. N-linked (GlcNAc...) asparagine glycosylation is found at Asn16 and Asn20. Intrachain disulfides connect Cys32–Cys281 and Cys113–Cys190. The chain crosses the membrane as a helical span at residues 45–67 (LPTIYSFIFLLGIIGNGLVVVVM). Over 68–81 (GYQKKSRTMTDKYR) the chain is Cytoplasmic. Residues 82–103 (LHLSVADLLFVFTLPFWSVDAA) form a helical membrane-spanning segment. The interval 98–101 (WSVD) is chemokine binding. The Extracellular segment spans residues 104-114 (IGWYFKEFLCK). Residues 115-134 (AVHVIYTVNLYSSVLILAFI) traverse the membrane as a helical segment. The segment at 117–121 (HVIYT) is chemokine binding. Over 135-158 (SLDRYLAIVHATNSQGSRKMLADK) the chain is Cytoplasmic. The segment at 139–151 (YLAIVHATNSQGS) is involved in dimerization; when bound to chemokine. The chain crosses the membrane as a helical span at residues 159-178 (VVYAGVWLPALLLTVPDLVF). Residues 179 to 202 (ARVSDENGQFVCDRIYPIENRETW) lie on the Extracellular side of the membrane. The tract at residues 190 to 194 (CDRIY) is chemokine binding, important for signaling. Residues 203-223 (TVGFRFLHITVGLILPGLIIL) traverse the membrane as a helical segment. The Cytoplasmic segment spans residues 224–248 (ICYCVIISKLSHSKGHQKRKALKTT). The chain crosses the membrane as a helical span at residues 249–268 (VILILAFFACWLPYYVCLTT). The Extracellular segment spans residues 269 to 289 (DTFMLLGLVKGDCIWENTLHM). A helical transmembrane segment spans residues 290-309 (AISITEALAFFHCCLNPILY). Over 310–358 (AFLGAKFKTSAQNAFTSVSRGSSLKILSKKRAGLSSVSTESESSSFHSS) the chain is Cytoplasmic. The tract at residues 338–358 (KKRAGLSSVSTESESSSFHSS) is disordered. Low complexity predominate over residues 344 to 358 (SSVSTESESSSFHSS).

The protein belongs to the G-protein coupled receptor 1 family. In terms of assembly, monomer. Can form dimers. Post-translationally, sulfation is required for efficient binding of cxcl12/sdf-1alpha and promotes its dimerization. O- and N-glycosylated. As to expression, highly expressed in the embryonic nervous system including forebrain, hindbrain and sensory organs (including eye), and in neural crest cells. Also expressed in the dorsal lateral plate, the first site of definitive hematopoiesis in the embryo. Appears in migrating presumptive primordial germ cells (pPGCs) from stage 24. Expressed in the epidermis at stage 40. In the adult, highly expressed in the spleen with lower levels of expression in the liver and very low levels in kidney, heart, skin and brain.

The protein localises to the cell membrane. It localises to the cytoplasm. The protein resides in the nucleus. Its subcellular location is the early endosome. It is found in the late endosome. The protein localises to the lysosome. Functionally, receptor for the C-X-C chemokine cxcl12/sdf-1. Transduces a signal by increasing the intracellular level of calcium ions. Signaling with cxcl12/sdf-1 mediates the directional movement of mesodermal cells during gastrulation. May play a role in the migration of embryonic presumptive primordial germ cells (pPGCs). May also be involved in regulating the migration of hematopoietic stem cells into the larval liver. The protein is C-X-C chemokine receptor type 4-A (cxcr4-a) of Xenopus laevis (African clawed frog).